The sequence spans 433 residues: MVNELTILIKNTTVLDLNKFAAVENDILIEGNKISKIGVDIEVNDKENLKIIDGSNKVALPGLINGHTHVAMTLFRGASDDLPLMDWLNNVIWPSESRLTGEDVYWGSLLGIVEMIKSGTTTFCDMYFFMDEVAHAVEQSGIRAILSRGMVALDPENGEKGLKESIDFIEKWQGKANGRITTALAPHAPYTCPPEFLKDVIWEAKRLNVPINIHISETLDEISIIKERYGTTPVRHLESLGLFEVKTIGAHLVHVDDEEIQILKRYQVGAIHNPQSNMKLASGIAPVAKMLEAGVLVGLGTDGAASNNDLDMIEELRAASYLQKVSSMNPEALNAKTSIAMATSLGARALGLTEVGLLKEGYKADIILLNTNETNFYPRHNIFNLIAYSAKGADVDTVIVDGEIIMEKRQLTRLDEEKIKFEANKRGLKLVAG.

Zn(2+)-binding residues include His67 and His69. The substrate site is built by Glu96, Arg148, and His187. Residue His214 coordinates Zn(2+). Residues Glu217 and Asp302 each contribute to the substrate site. Zn(2+) is bound at residue Asp302.

It belongs to the metallo-dependent hydrolases superfamily. MTA/SAH deaminase family. The cofactor is Zn(2+).

It carries out the reaction S-adenosyl-L-homocysteine + H2O + H(+) = S-inosyl-L-homocysteine + NH4(+). It catalyses the reaction S-methyl-5'-thioadenosine + H2O + H(+) = S-methyl-5'-thioinosine + NH4(+). Functionally, catalyzes the deamination of 5-methylthioadenosine and S-adenosyl-L-homocysteine into 5-methylthioinosine and S-inosyl-L-homocysteine, respectively. Is also able to deaminate adenosine. In Carboxydothermus hydrogenoformans (strain ATCC BAA-161 / DSM 6008 / Z-2901), this protein is 5-methylthioadenosine/S-adenosylhomocysteine deaminase.